A 164-amino-acid chain; its full sequence is T-cell surface glycoprotein CD3 zeta chain (164 aa).

The first 21 residues, 1-21 (MKWKALFTAAILQAQLPITEA), serve as a signal peptide directing secretion. Residues 22–30 (QSFGLLDPK) are Extracellular-facing. The helical transmembrane segment at 31-51 (LCYLLDGILFIYGVILTALFL) threads the bilayer. The Cytoplasmic segment spans residues 52 to 164 (RVKFSRSADA…ALHMQALPPR (113 aa)). Residue S58 is modified to Phosphoserine. ITAM domains lie at 61-89 (APAY…LDKR), 100-128 (PQRR…EIGM), and 131-159 (ERRR…LHMQ). Phosphotyrosine occurs at positions 64, 72, 83, 111, 123, 142, and 153. A compositionally biased stretch (basic and acidic residues) spans 83–96 (YDVLDKRRGRDPEM). The interval 83-111 (YDVLDKRRGRDPEMGGKPQRRKNPQEGLY) is disordered. The segment at 128–154 (MKGERRRGKGHDGLYQGLSTATKDTYD) is disordered.

The protein belongs to the CD3Z/FCER1G family. In terms of assembly, the TCR-CD3 complex is composed of a CD3D/CD3E and a CD3G/CD3E heterodimers that preferentially associate with TCRalpha and TCRbeta, respectively, to form TCRalpha/CD3E/CD3G and TCRbeta/CD3G/CD3E trimers. In turn, the hexamer interacts with CD3Z homodimer to form the TCR-CD3 complex. Alternatively, TCRalpha and TCRbeta can be replaced by TCRgamma and TCRdelta. Interacts with SLA. Interacts with TRAT1. Interacts with DOCK2. Interacts with SLA2. Interacts with SHB. Interacts with ZAP70. Interacts (tyrosine phosphorylated) with SHC1 (via SH2 domain). Interacts with PTPRC. Interacts with CRK; this interaction regulates CD3Z phosphorylation. Interacts (on T cell side) with CD81, ICAM1 and CD9 at immunological synapses between antigen-presenting cells and T cells. Interacts with CD160. Interacts with LY6E. The signaling subunit of immunoglobulin gamma (IgG) Fc receptor complex. As a homodimer or a heterodimer with FCER1G, associates with the ligand binding subunit FCGR3A (via transmembrane domain); this interaction is a prerequisite for Fc receptor complex expression on the cell surface. Interacts with CD5. As to quaternary structure, (Microbial infection) Interacts with HIV-1 Nef; this interaction up-regulates the expression of the Fas ligand (FASLG) at the cell surface. (Microbial infection) Interacts with HIV-2 Nef protein; this interaction induces down-regulation of cell surface TCR/CD3 complexes. Phosphorylated on Tyr residues after T-cell receptor triggering by LCK in association with CD4/CD8. In terms of tissue distribution, CD3Z is expressed in normal lymphoid tissue and in peripheral blood mononuclear cells (PBMCs).

The protein resides in the cell membrane. Functionally, part of the TCR-CD3 complex present on T-lymphocyte cell surface that plays an essential role in adaptive immune response. When antigen presenting cells (APCs) activate T-cell receptor (TCR), TCR-mediated signals are transmitted across the cell membrane by the CD3 chains CD3D, CD3E, CD3G and CD3Z. All CD3 chains contain immunoreceptor tyrosine-based activation motifs (ITAMs) in their cytoplasmic domain. Upon TCR engagement, these motifs become phosphorylated by Src family protein tyrosine kinases LCK and FYN, resulting in the activation of downstream signaling pathways. CD3Z ITAMs phosphorylation creates multiple docking sites for the protein kinase ZAP70 leading to ZAP70 phosphorylation and its conversion into a catalytically active enzyme. Plays an important role in intrathymic T-cell differentiation. Additionally, participates in the activity-dependent synapse formation of retinal ganglion cells (RGCs) in both the retina and dorsal lateral geniculate nucleus (dLGN). This chain is T-cell surface glycoprotein CD3 zeta chain (CD247), found in Homo sapiens (Human).